The primary structure comprises 491 residues: Argininosuccinate lyase (491 aa).

It belongs to the lyase 1 family. Argininosuccinate lyase subfamily.

It localises to the cytoplasm. It catalyses the reaction 2-(N(omega)-L-arginino)succinate = fumarate + L-arginine. The protein operates within amino-acid biosynthesis; L-arginine biosynthesis; L-arginine from L-ornithine and carbamoyl phosphate: step 3/3. The protein is Argininosuccinate lyase of Methanosarcina acetivorans (strain ATCC 35395 / DSM 2834 / JCM 12185 / C2A).